We begin with the raw amino-acid sequence, 825 residues long: E3 ubiquitin-protein ligase ICP0 (825 aa).

Positions 1–10 (MEPRPGTSSR) are enriched in polar residues. The disordered stretch occupies residues 1-121 (MEPRPGTSSR…VGEEEAEAGG (121 aa)). Acidic residues predominate over residues 46-57 (DSEEETEVGISD). The segment at 126 to 167 (CAVCTDEIAPPLRCQSFPCLHPFCIPCMKTWIPLRNTCPLCN) adopts an RING-type zinc-finger fold. Disordered regions lie at residues 221–312 (RSLS…GGGP), 325–683 (PPAA…PAPG), and 803–825 (RHPW…GHGE). A compositionally biased stretch (acidic residues) spans 242 to 251 (TDDEDDDLAD). Composition is skewed to low complexity over residues 273 to 283 (TRGTSQPAATR), 290 to 303 (PRSS…LRAG), and 350 to 367 (PPAR…VISD). A compositionally biased stretch (pro residues) spans 368 to 379 (SPPPSPRRPAGP). Low complexity-rich tracts occupy residues 380 to 394 (GPLS…QVSS) and 402 to 439 (PQSS…DAAG). Residues 456 to 468 (RMTQAQTDTQAQS) are compositionally biased toward polar residues. Over residues 479–491 (GSGGPGAEGGPGV) the composition is skewed to gly residues. Composition is skewed to low complexity over residues 492 to 510 (PRGT…GAAA) and 519 to 540 (DSGP…PLAP). The segment covering 552 to 563 (RAPDSDSGDRGH) has biased composition (basic and acidic residues). Low complexity predominate over residues 567-641 (APASAGAAPP…GGSVASASGA (75 aa)). Residues 658 to 667 (GPRKCARKTR) are compositionally biased toward basic residues. A compositionally biased stretch (low complexity) spans 811–825 (GAPAPAGDAPAGHGE).

Post-translationally, auto-ubiquitinated.

It carries out the reaction S-ubiquitinyl-[E2 ubiquitin-conjugating enzyme]-L-cysteine + [acceptor protein]-L-lysine = [E2 ubiquitin-conjugating enzyme]-L-cysteine + N(6)-ubiquitinyl-[acceptor protein]-L-lysine.. In terms of biological role, evades nuclear antiviral defenses triggered by dsDNA viruses. Acts during the initial stages of lytic infection and the reactivation of latent viral genome. Prevents the antiviral effect of nuclear bodies by degrading host PML and SP100. Prevents antiviral response to viral DNA induced by IFI16 by degrading it. Additionally, inhibits host IRF3 nuclear signaling to prevent interferon production by the infected cells. The polypeptide is E3 ubiquitin-protein ligase ICP0 (RL2) (Homo sapiens (Human)).